Reading from the N-terminus, the 596-residue chain is Jacalin-related lectin 46 (596 aa).

A disordered region spans residues 1–20 (MTERSEALGKDGNRRWDDKS). 4 Jacalin-type lectin domains span residues 2 to 143 (TERS…YFTR), 146 to 291 (PTRI…YFTP), 294 to 439 (PTKS…HFYP), and 446 to 592 (AEKL…HVLP).

It belongs to the jacalin lectin family.

In Arabidopsis thaliana (Mouse-ear cress), this protein is Jacalin-related lectin 46 (JAL46).